We begin with the raw amino-acid sequence, 551 residues long: Cytochrome P450 monooxygenase FCK2 (551 aa).

The next 3 helical transmembrane spans lie at 8–28 (FDPA…VFIF), 35–55 (LHVF…VYIV), and 69–89 (VTTI…ISIL). A glycan (N-linked (GlcNAc...) asparagine) is linked at N258. C493 is a heme binding site.

It belongs to the cytochrome P450 family. Requires heme as cofactor.

The protein resides in the membrane. It participates in secondary metabolite biosynthesis. Its function is as follows. Cytochrome P450 monooxygenase; part of the gene cluster that mediates the biosynthesis of cytokinins such as fusatin, fusatinic acids or 8-oxofusatin, known for their growth promoting and anti-senescence activities toward host plants. FCK1 is a bifunctional enzyme that performs the first steps in the biosynthesis of Fusarium cytokinins. It first condenses adenosine monophosphate (AMP) with dimethylallyl diphosphate (DMAPP) to yield isoprenyl adenosine monophosphate. It then catalyzes the removal of the phosphoribose to produce isopentenylaldehyde. The cytochrome P450 monooxygenase then converts isopentenylaldehyde to trans-zeatin. A condensation step converts trans-zeatin to fusatin which is further modified to produce fusatinic acid. The mechanism for oxidation of fusatin to fusatinic acid remains unknown. 8-oxofusatin could be produced through several pathways, via direct oxygenation of fusatin, or via the 8-oxo-pentenyladenine intermediate which itself must arise from either the prenylation of 8-oxo-AMP by FCK1 and/or oxygenation of isopentenylaldehyde. Both the FCK3 and FCK4 enzymes act downstream of the identified cytokinins to produce yet unidentified compounds. In Fusarium pseudograminearum (strain CS3096) (Wheat and barley crown-rot fungus), this protein is Cytochrome P450 monooxygenase FCK2.